We begin with the raw amino-acid sequence, 1310 residues long: Zinc finger protein 521 (1310 aa).

Residues Met-1–Arg-10 are compositionally biased toward basic residues. The disordered stretch occupies residues Met-1–Ala-46. A compositionally biased stretch (basic and acidic residues) spans Ser-11 to Asp-21. A C2H2-type 1; degenerate zinc finger spans residues His-48–Ile-68. Residues Asp-82 to Phe-106 form a disordered region. Residues Trp-87–Gln-97 show a composition bias toward polar residues. 7 C2H2-type zinc fingers span residues Tyr-119–His-141, Phe-147–His-169, Tyr-175–His-197, Tyr-203–His-225, Gln-247–His-270, Leu-282–His-305, and Asn-311–His-333. A C2H2-type 9; degenerate zinc finger spans residues Tyr-404 to His-428. 3 C2H2-type zinc fingers span residues His-436–His-459, Tyr-476–His-499, and Phe-512–His-535. A C2H2-type 13; atypical zinc finger spans residues Tyr-559–His-584. 7 C2H2-type zinc fingers span residues Tyr-633 to His-655, Leu-663 to His-685, Tyr-693 to His-716, Phe-721 to His-744, Tyr-751 to His-774, His-782 to His-804, and Tyr-808 to His-831. A C2H2-type 21; degenerate zinc finger spans residues Tyr-885–Asp-907. 3 consecutive C2H2-type zinc fingers follow at residues Tyr-929–His-951, Tyr-958–His-980, and Phe-1019–His-1041. Residues Tyr-1064 to Leu-1082 form a C2H2-type 25; degenerate zinc finger. 5 C2H2-type zinc fingers span residues Thr-1138–His-1161, Tyr-1194–His-1216, His-1224–His-1246, Phe-1255–His-1278, and Tyr-1285–His-1308.

This sequence belongs to the krueppel C2H2-type zinc-finger protein family.

It is found in the nucleus. In terms of biological role, transcription factor that can both act as an activator or a repressor depending on the context. Involved in BMP signaling and in the regulation of the immature compartment of the hematopoietic system. The protein is Zinc finger protein 521 (znf521) of Xenopus laevis (African clawed frog).